The sequence spans 268 residues: Aliphatic sulfonates import ATP-binding protein SsuB 2 (268 aa).

The ABC transporter domain maps to 16-230 (VQLRNVVRQF…DSGQAGFQSI (215 aa)). An ATP-binding site is contributed by 48–55 (GASGSGKT).

Belongs to the ABC transporter superfamily. Aliphatic sulfonates importer (TC 3.A.1.17.2) family. The complex is composed of two ATP-binding proteins (SsuB), two transmembrane proteins (SsuC) and a solute-binding protein (SsuA).

Its subcellular location is the cell inner membrane. It carries out the reaction ATP + H2O + aliphatic sulfonate-[sulfonate-binding protein]Side 1 = ADP + phosphate + aliphatic sulfonateSide 2 + [sulfonate-binding protein]Side 1.. Part of the ABC transporter complex SsuABC involved in aliphatic sulfonates import. Responsible for energy coupling to the transport system. The sequence is that of Aliphatic sulfonates import ATP-binding protein SsuB 2 from Pseudomonas savastanoi pv. phaseolicola (strain 1448A / Race 6) (Pseudomonas syringae pv. phaseolicola (strain 1448A / Race 6)).